The sequence spans 299 residues: ClpXP adapter protein SpxH (299 aa).

This sequence belongs to the SpxH family. As to quaternary structure, interacts with Spx. Interacts with SpxO/YuzO.

It localises to the cytoplasm. Irreversible aggregation upon several stress conditions prevents interaction with Spx and therefore leads to Spx stabilization. Inhibited by interaction with SpxO/YuzO. Adapter protein required for efficient degradation of Spx by ClpXP under non-stress conditions. Interaction with Spx stabilizes Spx and exposes the C-terminus of Spx for recognition and proteolysis by ClpXP. Is specific for Spx and does not enhance proteolysis by ClpCP protease. Probably binds 2 zinc ions. The chain is ClpXP adapter protein SpxH from Bacillus subtilis (strain 168).